Reading from the N-terminus, the 88-residue chain is Small ribosomal subunit protein uS15 (88 aa).

This sequence belongs to the universal ribosomal protein uS15 family. As to quaternary structure, part of the 30S ribosomal subunit. Forms a bridge to the 50S subunit in the 70S ribosome, contacting the 23S rRNA.

In terms of biological role, one of the primary rRNA binding proteins, it binds directly to 16S rRNA where it helps nucleate assembly of the platform of the 30S subunit by binding and bridging several RNA helices of the 16S rRNA. Its function is as follows. Forms an intersubunit bridge (bridge B4) with the 23S rRNA of the 50S subunit in the ribosome. In Trichlorobacter lovleyi (strain ATCC BAA-1151 / DSM 17278 / SZ) (Geobacter lovleyi), this protein is Small ribosomal subunit protein uS15.